The following is a 101-amino-acid chain: Small ribosomal subunit protein uS10 (101 aa).

Belongs to the universal ribosomal protein uS10 family. As to quaternary structure, part of the 30S ribosomal subunit.

Its function is as follows. Involved in the binding of tRNA to the ribosomes. The sequence is that of Small ribosomal subunit protein uS10 from Mycobacterium ulcerans (strain Agy99).